An 88-amino-acid chain; its full sequence is Alpha-latrotoxin-associated low molecular weight protein (88 aa).

The first 18 residues, 1–18 (MSKLFFVVFLCLIISVFA), serve as a signal peptide directing secretion.

It belongs to the arthropod CHH/MIH/GIH/VIH hormone family. Expressed by the venom gland.

The protein resides in the secreted. May increase the toxicity of alpha-latrotoxin and/or other venom components. Is non-toxic to mice and to the cockroach Periplaneta americana. The chain is Alpha-latrotoxin-associated low molecular weight protein from Latrodectus tredecimguttatus (Mediterranean black widow spider).